A 163-amino-acid polypeptide reads, in one-letter code: Troponin C, skeletal muscle (163 aa).

Ala-2 carries the blocked amino end (Ala) modification. EF-hand domains follow at residues 18–53, 54–89, 94–129, and 130–163; these read EMIA…LGQN, PTKE…QMKE, KSEE…TGEH, and VTEE…EGVQ. Residues Asp-31, Asp-33, Asp-37, Glu-42, Asp-67, Asp-69, Ser-71, Thr-73, Glu-78, Asp-107, Asn-109, Asp-111, Glu-118, Asp-143, Asn-145, Asp-147, Arg-149, and Glu-154 each coordinate Ca(2+).

Belongs to the troponin C family.

Troponin is the central regulatory protein of striated muscle contraction. Tn consists of three components: Tn-I which is the inhibitor of actomyosin ATPase, Tn-T which contains the binding site for tropomyosin and Tn-C. The binding of calcium to Tn-C abolishes the inhibitory action of Tn on actin filaments. The chain is Troponin C, skeletal muscle (TNNC2) from Gallus gallus (Chicken).